Here is a 630-residue protein sequence, read N- to C-terminus: DELLA protein DWARF8 (630 aa).

The segment at 1–35 (MKREYQDAGGSGGDMGSSKDKMMAAAAGAGEQEEE) is disordered. A DELLA motif motif is present at residues 38-42 (DELLA). The interval 161–222 (PIPSPVAAPS…AAPPATQASA (62 aa)) is disordered. 2 stretches are compositionally biased toward low complexity: residues 165–176 (PVAAPSADPSTD) and 191–222 (TSSSSSSSSSMDGGRTRSSVVEAAPPATQASA). Residues 234–623 (VDTQEAGIRL…RPLIATSAWR (390 aa)) form the GRAS domain. A leucine repeat I (LRI) region spans residues 241–297 (IRLVHALLACAEAVQQENFSAAEALVKQIPMLASSQGGAMRKVAAYFGEALARRVYR). Residues 248 to 252 (LACAE) carry the LxCxE motif motif. Residues 316-381 (HAHFYESCPY…GGPPSFRLTG (66 aa)) form a VHIID region. The VHIID signature appears at 347–351 (VHVVD). A leucine repeat II (LRII) region spans residues 395-427 (QVGWKLAQFAHTIRVDFQYRGLVAATLADLEPF). The interval 443–544 (IAVNSVFELH…EVYLGRQICN (102 aa)) is PFYRE. The short motif at 451 to 455 (LHRLL) is the LXXLL motif element. The tract at residues 547–623 (ACEGAERTER…RPLIATSAWR (77 aa)) is SAW.

The protein belongs to the GRAS family. DELLA subfamily. In terms of processing, phosphorylated. Post-translationally, ubiquitinated. Upon GA application it is ubiquitinated, leading to its subsequent degradation.

It is found in the nucleus. Probable transcriptional regulator that acts as a repressor of the gibberellin (GA) signaling pathway. Probably acts by participating in large multiprotein complexes that repress transcription of GA-inducible genes. Upon GA application, it is degraded by the proteasome, allowing the GA signaling pathway. The chain is DELLA protein DWARF8 (D8) from Zea mays (Maize).